Here is a 391-residue protein sequence, read N- to C-terminus: MAIINMSELDLQGKRVLIREDLNVPVSEGVVTSDARLRAALPSIKLALEKGAAVMVMSHLGRPTEGEFNSEFSLQPVVDYLTKALSCPVRLAKDYLDGVEANVGEVVVFENVRFNVGEKKNDEALAKKLAALCDVYVMDAFGTAHRAQASTHGVGLHAPIACAGPLLAGELEALGKAMDNPARPLVAIVGGSKVSTKLTVLESLSKIVDQLVVGGGIANTFIAAAGHEVGKSLYEADLIDEAKRLAANAQSRGGDIPVPTDVVVAGEFSPTAAATLKGVSQVSADEMIFDIGPDSSEALAEILKNAGTIVWNGPVGVFEFDQFGEGTKRIAAAIADSSAFSIAGGGDTLAAVDKYGIADKVSYISTGGGAFLEFLEGKELPAVAMLESRGK.

Substrate contacts are provided by residues 21–23, Arg-36, 59–62, Arg-113, and Arg-146; these read DLN and HLGR. Residues Lys-197, Glu-319, and 345-348 each bind ATP; that span reads GGDT.

Belongs to the phosphoglycerate kinase family. In terms of assembly, monomer.

It is found in the cytoplasm. It catalyses the reaction (2R)-3-phosphoglycerate + ATP = (2R)-3-phospho-glyceroyl phosphate + ADP. It functions in the pathway carbohydrate degradation; glycolysis; pyruvate from D-glyceraldehyde 3-phosphate: step 2/5. The protein is Phosphoglycerate kinase of Shewanella woodyi (strain ATCC 51908 / MS32).